Here is a 1745-residue protein sequence, read N- to C-terminus: MSARAAAAKSTAMEETAIWEQHTVTLHRAPGFGFGIAISGGRDNPHFQSGETSIVISDVLKGGPAEGQLQENDRVAMVNGVSMDNVEHAFAVQQLRKSGKNAKITIRRKKKVQIPVSHPDPEPVSDNEDDSYDEEVHDPRAGRGALANRRSEKSWARDRSASRERSLSPRSDRRSVASSQPAKPTKVTLVKSRKNEEYGLRLASHIFVKEISQDSLAARDGNIQEGDVVLKINGTVTENMSLTDAKTLIERSKGKLKMVVQRDERATLLNVPDLSDSIHSANASERDDISEIQSLASDHSGRSHDRPPRRSQSRSPDQRSEPSDHSTQSPQQPSNGSLRSREEERMSKPGAISTPVKHVDDHPPKAVEEVTVEKNEKQTPTLPEPKPVYAQVGQPDVDLPVSPSDGALPNSAHEDGILRPSMKLVKFRKGDSVGLRLAGGNDVGIFVAGVLEDSPAAKEGLEEGDQILRVNNVDFTNIIREEAVLFLLDLPKGEEVTILAQKKKDVYRRIVESDVGDSFYIRTHFEYEKESPYGLSFNKGEVFRVVDTLYNGKLGSWLAIRIGKNHKEVERGIIPNKNRAEQLASVQYTLPKTAGGDRADFWRFRGLRSSKRNLRKSREDLSAQPVQTKFPAYERVVLREAGFLRPVTIFGPIADVAREKLAREEPDIYQIAKSEPRDAGTDHRSSGIIRLHTIKQIIDQDKHALLDVTPNAVDRLNYAQWYPIVVFLNPDSKQGVKTMRMRLCPESRKSARKLYERSHKLRKNNHHLFTTTINLNSMNDGWYGALKEAIQQQQNQLVWVSEGKADGATSDDLDLHDDRLSYLSAPGSEYSMYSTDSRHTSDYEDTDTEGGAYTDQELDETLNDEVGTPPESAITRSSEPVREDSSGMHHENQTYPPYSPQAQPQAIHRIDSPGLKPASQQKAEASSPVPYLSPETTPASSASAVNHNVSVTNVSLEEPAPAPPTSHASQPGCLGAPSAEAAHVVLRGEGPPLPPHADPAKVYRKEPYSEEMMRQNHILKQPALGHPGQRPDKEPNLAYEPQLPYIEKQASRDLEQPSYRYEVSSYTDQFSRNYDHRLRFEDRIPTYEDQWSYYDDKQPYQPRPFENQHPRDLDSRQHPEEASERGYFQRFEEPAPLSYDSRTRYEQLPRTSTLRHEEQPAPAYEVHNRYRPEAQPYSSTGPKSSEPKQYFDQYPRSYEQVPPPGFTSKTGHYEPLHGAAVVPPLIPSSQQKPEVLPSATKPQPPPPTLTEEEEDPAMKPQSVLTRVKMFENKRSASLENKKDVNDTASFKPPEVASKPPGASLAGPKPVPQSQFSEHDKTLYRLPEPQKPQVKPPEDIVRSNHYDPEEDEEYYRKQLSYFDRRSFESKPSAHLPAGHHSEPAKPVHSQSQPNFSSYSSKGKPETDAVDRSFSEKRYDPAQATPPPPPLPSQYSQPAPPLSSSSLHIHSKGAQGEGNSVSLDFQNSYMSKPDPPPSQSKPATFRPPTREDPPQTFYPQKSFPDKAPVNGAEQTQKTITPVYNRFTPKPYTSSARPFERKFESPKFNHNLLPSETVHKPELSSKTPTSPKTLMKAHSSTQPPEFDSGVETFSVHTDKPKYQMNNISTMPKAVPVSPSAVEEDEDEDGHTVVATARGIFNSNGGVLSSIETGVSIIIPQGAIPEGIEQEIYFKVCRDNSILPPLDKEKGETLLSPLVMCGPHGLKFLKPVELRLPHCDPKTWQNKCLPGDPNYLVGANCVSVLIDHF.

Residues 23–110 form the PDZ 1 domain; the sequence is TVTLHRAPGF…NAKITIRRKK (88 aa). Residues 102–112 are compositionally biased toward basic residues; it reads AKITIRRKKKV. The tract at residues 102–189 is disordered; that stretch reads AKITIRRKKK…QPAKPTKVTL (88 aa). The segment covering 123–136 has biased composition (acidic residues); the sequence is PVSDNEDDSYDEEV. At Ser125 the chain carries Phosphoserine. Tyr132 carries the phosphotyrosine modification. Positions 149-175 are enriched in basic and acidic residues; it reads RRSEKSWARDRSASRERSLSPRSDRRS. Ser175, Ser178, and Ser179 each carry phosphoserine. Thr185 carries the post-translational modification Phosphothreonine. The PDZ 2 domain maps to 186 to 264; the sequence is KVTLVKSRKN…KLKMVVQRDE (79 aa). 2 positions are modified to phosphoserine: Ser212 and Ser241. Thr267 is modified (phosphothreonine). A phosphoserine mark is found at Ser275, Ser277, Ser280, Ser284, Ser290, Ser294, Ser297, Ser300, Ser323, Ser329, Ser334, Ser337, and Ser353. A disordered region spans residues 296-364; that stretch reads ASDHSGRSHD…PVKHVDDHPP (69 aa). Residues 299–308 show a composition bias toward basic and acidic residues; the sequence is HSGRSHDRPP. A compositionally biased stretch (polar residues) spans 325-338; the sequence is HSTQSPQQPSNGSL. Phosphothreonine is present on Thr354. The region spanning 421–502 is the PDZ 3 domain; that stretch reads SMKLVKFRKG…GEEVTILAQK (82 aa). In terms of domain architecture, SH3 spans 516–584; sequence GDSFYIRTHF…PNKNRAEQLA (69 aa). Residues 610–791 form the Guanylate kinase-like domain; it reads SKRNLRKSRE…WYGALKEAIQ (182 aa). Ser617 and Ser622 each carry phosphoserine. The interval 633-876 is occludin (OCLN)-binding region; the sequence is YERVVLREAG…GTPPESAITR (244 aa). Phosphothreonine is present on Thr809. Ser810 and Ser821 each carry phosphoserine. A Phosphotyrosine modification is found at Tyr822. Phosphoserine occurs at positions 824, 828, and 837. 2 disordered regions span residues 825-944 and 956-1042; these read APGS…SASA and LEEP…YEPQ. 5 positions are modified to phosphothreonine: Thr846, Thr848, Thr854, Thr861, and Thr868. Over residues 879-892 the composition is skewed to basic and acidic residues; sequence EPVREDSSGMHHEN. The segment covering 893 to 906 has biased composition (low complexity); that stretch reads QTYPPYSPQAQPQA. The residue at position 912 (Ser912) is a Phosphoserine. Over residues 998 to 1014 the composition is skewed to basic and acidic residues; sequence DPAKVYRKEPYSEEMMR. A Phosphoserine modification is found at Ser1071. Residues 1090-1586 are disordered; the sequence is QWSYYDDKQP…STQPPEFDSG (497 aa). Residues 1106 to 1124 show a composition bias toward basic and acidic residues; sequence ENQHPRDLDSRQHPEEASE. Ser1138 carries the post-translational modification Phosphoserine. Phosphotyrosine occurs at positions 1139 and 1164. The interval 1150 to 1370 is actin-binding region (ABR); the sequence is RTSTLRHEEQ…FDRRSFESKP (221 aa). 2 stretches are compositionally biased toward basic and acidic residues: residues 1268–1285 and 1335–1346; these read KMFE…KDVN and PPEDIVRSNHYD. Position 1353 is a phosphotyrosine (Tyr1353). Ser1365 bears the Phosphoserine mark. Residues 1388-1399 show a composition bias toward low complexity; sequence SQSQPNFSSYSS. Residues 1401 to 1418 show a composition bias toward basic and acidic residues; the sequence is GKPETDAVDRSFSEKRYD. At Ser1411 the chain carries Phosphoserine. Residues 1431 to 1445 are compositionally biased toward low complexity; sequence SQYSQPAPPLSSSSL. Polar residues-rich tracts occupy residues 1455–1468 and 1510–1519; these read EGNS…NSYM and AEQTQKTITP. Positions 1535–1544 are enriched in basic and acidic residues; it reads PFERKFESPK. The residue at position 1542 (Ser1542) is a Phosphoserine. Residues 1561–1580 show a composition bias toward polar residues; it reads SSKTPTSPKTLMKAHSSTQP. Ser1614 bears the Phosphoserine mark. In terms of domain architecture, ZU5 spans 1631–1745; that stretch reads ATARGIFNSN…NCVSVLIDHF (115 aa).

Belongs to the MAGUK family. Homodimer. Forms heterodimers TJP3. Forms a heterodimer (via PDZ2 domain) with TJP2/ZO2 (via PDZ2 domain). Interacts with OCLN, CALM, claudins, CGN/cingulin, CXADR, GJD3 and UBN1. Interacts (via ZU5 domain) with CDC42BPB. Interacts (via PDZ domain) with GJA1. Interacts (via PDZ domains) with ANKRD2. Interacts with POPDC1 (via the C-terminus cytoplasmic tail). Interacts with GJA12 and KIRREL1. Interacts with HSPA4. Interacts (via ZU5 domain) with MYZAP. Interacts with DLL1. Interacts with USP53 (via the C-terminal region). Interacts with DNMBP (via C-terminal domain); required for the apical cell-cell junction localization of DNMBP. Interacts with SPEF1. Interacts (via N-terminus) with CTNNA1. Interacts with CLDN18. Interacts with CLDN16 (via TRV motif); this is a prerequisite for anchoring of CLDN16 at the tight junction. Interacts with PKP1; the interaction facilitates TJP1/ZO-1 localization to the plasma membrane. Interacts with PATJ (via PDZ1-6 domains); the interaction is required for attachment and extension of TJP1/ZO1 condensates along the apical cell interface. Post-translationally, phosphorylated at tyrosine redidues in response to epidermal growth factor (EGF). This response is dependent on an intact actin microfilament system. Dephosphorylated by PTPRJ. Expressed between ameloblasts, at ameloblast-ameloblast junctions and in the stratum intermedium during pre-secretory and secretory stages of tooth development (at protein level).

The protein resides in the cell membrane. Its subcellular location is the cell junction. It localises to the tight junction. The protein localises to the gap junction. It is found in the cytoplasm. The protein resides in the myofibril. Its subcellular location is the sarcomere. It localises to the i band. Tjp1, TjpP2, and Tjp3 are closely related scaffolding proteins that link tight junction (TJ) transmembrane proteins such as claudins, junctional adhesion molecules, and occludin to the actin cytoskeleton. Forms a multistranded TJP1/ZO1 condensate which elongates to form a tight junction belt, the belt is anchored at the apical cell membrane via interaction with PATJ. The tight junction acts to limit movement of substances through the paracellular space and as a boundary between the compositionally distinct apical and basolateral plasma membrane domains of epithelial and endothelial cells. Necessary for lumenogenesis, and particularly efficient epithelial polarization and barrier formation. Plays a role in the regulation of cell migration by targeting Cdc42bpb to the leading edge of migrating cells. Plays an important role in podosome formation and associated function, thus regulating cell adhesion and matrix remodeling. With Tjp2 and TJjp3, participates in the junctional retention and stability of the transcription factor Dbpa, but is not involved in its shuttling to the nucleus. May play a role in mediating cell morphology changes during ameloblast differentiation via its role in tight junctions. The chain is Tight junction protein 1 from Mus musculus (Mouse).